The sequence spans 309 residues: Probable manganese-dependent inorganic pyrophosphatase (309 aa).

Residues H9, D13, D15, D75, H97, and D149 each contribute to the Mn(2+) site.

It belongs to the PPase class C family. Mn(2+) is required as a cofactor.

It localises to the cytoplasm. It catalyses the reaction diphosphate + H2O = 2 phosphate + H(+). This Lactiplantibacillus plantarum (strain ATCC BAA-793 / NCIMB 8826 / WCFS1) (Lactobacillus plantarum) protein is Probable manganese-dependent inorganic pyrophosphatase.